We begin with the raw amino-acid sequence, 379 residues long: Cobalt-precorrin-5B C(1)-methyltransferase (379 aa).

The protein belongs to the CbiD family.

The enzyme catalyses Co-precorrin-5B + S-adenosyl-L-methionine = Co-precorrin-6A + S-adenosyl-L-homocysteine. The protein operates within cofactor biosynthesis; adenosylcobalamin biosynthesis; cob(II)yrinate a,c-diamide from sirohydrochlorin (anaerobic route): step 6/10. Its function is as follows. Catalyzes the methylation of C-1 in cobalt-precorrin-5B to form cobalt-precorrin-6A. The polypeptide is Cobalt-precorrin-5B C(1)-methyltransferase (Salmonella paratyphi A (strain ATCC 9150 / SARB42)).